We begin with the raw amino-acid sequence, 622 residues long: DNA mismatch repair protein MutL (622 aa).

It belongs to the DNA mismatch repair MutL/HexB family.

Functionally, this protein is involved in the repair of mismatches in DNA. It is required for dam-dependent methyl-directed DNA mismatch repair. May act as a 'molecular matchmaker', a protein that promotes the formation of a stable complex between two or more DNA-binding proteins in an ATP-dependent manner without itself being part of a final effector complex. This chain is DNA mismatch repair protein MutL, found in Actinobacillus pleuropneumoniae serotype 3 (strain JL03).